The chain runs to 169 residues: MTAVAAAPFSFKDFFKSFMLVELFKGMALTGRHAFRRKVTVQFPEEKTPLSPRFRGLHALRRYDNGEERCIACKLCEAVCPALAITIESELRADGSRRTTRYDIDLTKCIFCGFCEESCPVDSIVETHIFEYHGEKRGDLYFTKDMLLAVGDRYEAEIAAARAADAKYR.

2 4Fe-4S ferredoxin-type domains span residues Arg61 to Glu90 and Thr100 to Ile129. [4Fe-4S] cluster contacts are provided by Cys70, Cys73, Cys76, Cys80, Cys109, Cys112, Cys115, and Cys119.

This sequence belongs to the complex I 23 kDa subunit family. NDH-1 is composed of 14 different subunits. Subunits NuoA, H, J, K, L, M, N constitute the membrane sector of the complex. The cofactor is [4Fe-4S] cluster.

The protein resides in the cell inner membrane. It carries out the reaction a quinone + NADH + 5 H(+)(in) = a quinol + NAD(+) + 4 H(+)(out). Its function is as follows. NDH-1 shuttles electrons from NADH, via FMN and iron-sulfur (Fe-S) centers, to quinones in the respiratory chain. The immediate electron acceptor for the enzyme in this species is believed to be ubiquinone. Couples the redox reaction to proton translocation (for every two electrons transferred, four hydrogen ions are translocated across the cytoplasmic membrane), and thus conserves the redox energy in a proton gradient. In Verminephrobacter eiseniae (strain EF01-2), this protein is NADH-quinone oxidoreductase subunit I.